Reading from the N-terminus, the 188-residue chain is Peptidyl-tRNA hydrolase (188 aa).

Y14 serves as a coordination point for tRNA. H19 acts as the Proton acceptor in catalysis. Residues Y64, N66, and N113 each contribute to the tRNA site.

Belongs to the PTH family. As to quaternary structure, monomer.

It localises to the cytoplasm. It carries out the reaction an N-acyl-L-alpha-aminoacyl-tRNA + H2O = an N-acyl-L-amino acid + a tRNA + H(+). Functionally, hydrolyzes ribosome-free peptidyl-tRNAs (with 1 or more amino acids incorporated), which drop off the ribosome during protein synthesis, or as a result of ribosome stalling. Its function is as follows. Catalyzes the release of premature peptidyl moieties from peptidyl-tRNA molecules trapped in stalled 50S ribosomal subunits, and thus maintains levels of free tRNAs and 50S ribosomes. The sequence is that of Peptidyl-tRNA hydrolase from Chloroflexus aggregans (strain MD-66 / DSM 9485).